We begin with the raw amino-acid sequence, 2109 residues long: Nonribosomal peptide synthetase sidE (2109 aa).

The interval 31–512 is adenylation 1; that stretch reads LTPPSPPCLV…QNGKVDFRAI (482 aa). In terms of domain architecture, Carrier 1 spans 537–613; sequence AGLSETASKI…EIADTVQLDS (77 aa). Serine 574 is modified (O-(pantetheine 4'-phosphoryl)serine). Residues 646 to 908 are condensation 1; sequence DAYPVTALQE…LAVVPYAIAI (263 aa). The tract at residues 1058 to 1555 is adenylation 2; it reads RTLNGQFEAT…GKANRKQLKA (498 aa). Residues 1584 to 1660 form the Carrier 2 domain; that stretch reads PLASETQKVL…AMADQLKGES (77 aa). An O-(pantetheine 4'-phosphoryl)serine modification is found at serine 1621. Residues 1695–1968 are condensation 2; sequence YPCPPGQAEF…NFLPMRSKVD (274 aa).

This sequence belongs to the NRP synthetase family.

It participates in siderophore biosynthesis. Nonribosomal peptide synthetase; part of the siderophore biosynthetic pathway. Aspergillus fumigatus produces four types of siderophores, low-molecular-mass iron chelators, including excreted fusarinine C (FsC) and triacetylfusarinine C (TAFC) for iron uptake and intacellular ferricrocin (FC) for hyphal and hydroxyferricrocin (HFC) for conidial iron distribution and storage. TAFC consists of three N(2)-acetyl-N(5)-anhydromevalonyl-N(5)-hydroxyornithine residues cyclically linked by ester bonds; FC is a cyclic hexapeptide with the structure Gly-Ser-Gly-(N(5)-acetyl-N(5)-hydroxyornithine)x3. The biosynthesis of all four siderophores depends on the hydroxylation of ornithine, catalyzed by the monooxygenase sidA. Subsequently, the pathways for biosynthesis of extra- and intracellular siderophores split. For biosynthesis of extracellular siderophores, the transacylase sidF transfers anhydromevalonyl to N(5)-hydroxyornithine. The required anhydromevalonyl-CoA moiety is derived from mevalonate by CoA ligation and dehydration catalyzed by sidI and sidH respectively. The acetylation of N(5)-hydroxyornithine for FC biosynthesis involves the constitutively expressed sidL. FC is hydroxylated to HFC by an as yet uncharacterized enzyme during conidiation. Assembly of fusarinine C (FsC) and FC is catalyzed by two different nonribosomal peptide synthetases (NRPS), sidD and sidC respectively. Subsequently, sidG catalyzes N2-acetylation of FsC for forming TAFC. Both extra- and intracellular siderophores are crucial for growth during iron limitation and virulence. This chain is Nonribosomal peptide synthetase sidE, found in Aspergillus fumigatus (strain ATCC MYA-4609 / CBS 101355 / FGSC A1100 / Af293) (Neosartorya fumigata).